We begin with the raw amino-acid sequence, 129 residues long: Large ribosomal subunit protein uL22 (129 aa).

Belongs to the universal ribosomal protein uL22 family. In terms of assembly, part of the 50S ribosomal subunit.

In terms of biological role, this protein binds specifically to 23S rRNA; its binding is stimulated by other ribosomal proteins, e.g. L4, L17, and L20. It is important during the early stages of 50S assembly. It makes multiple contacts with different domains of the 23S rRNA in the assembled 50S subunit and ribosome. Functionally, the globular domain of the protein is located near the polypeptide exit tunnel on the outside of the subunit, while an extended beta-hairpin is found that lines the wall of the exit tunnel in the center of the 70S ribosome. This Mesorhizobium japonicum (strain LMG 29417 / CECT 9101 / MAFF 303099) (Mesorhizobium loti (strain MAFF 303099)) protein is Large ribosomal subunit protein uL22.